The following is a 92-amino-acid chain: Small ribosomal subunit protein uS19 (92 aa).

This sequence belongs to the universal ribosomal protein uS19 family.

Protein S19 forms a complex with S13 that binds strongly to the 16S ribosomal RNA. This Nostoc sp. (strain PCC 7120 / SAG 25.82 / UTEX 2576) protein is Small ribosomal subunit protein uS19.